A 218-amino-acid chain; its full sequence is Large ribosomal subunit protein uL3 (218 aa).

It belongs to the universal ribosomal protein uL3 family. In terms of assembly, part of the 50S ribosomal subunit. Forms a cluster with proteins L14 and L19.

Functionally, one of the primary rRNA binding proteins, it binds directly near the 3'-end of the 23S rRNA, where it nucleates assembly of the 50S subunit. In Rhodococcus jostii (strain RHA1), this protein is Large ribosomal subunit protein uL3.